Reading from the N-terminus, the 143-residue chain is Transcriptional regulator SlyA (143 aa).

The region spanning E2 to K135 is the HTH marR-type domain. The segment at residues Q49–E72 is a DNA-binding region (H-T-H motif).

The protein belongs to the SlyA family. In terms of assembly, homodimer.

Transcription regulator that can specifically activate or repress expression of target genes. The sequence is that of Transcriptional regulator SlyA from Yersinia pestis bv. Antiqua (strain Antiqua).